Reading from the N-terminus, the 352-residue chain is Holliday junction branch migration complex subunit RuvB (352 aa).

Positions 4–191 (TDKLAAPARV…FGIVARLEFY (188 aa)) are large ATPase domain (RuvB-L). Residues leucine 30, arginine 31, glycine 72, lysine 75, threonine 76, threonine 77, 138-140 (EDY), arginine 181, tyrosine 191, and arginine 228 contribute to the ATP site. Position 76 (threonine 76) interacts with Mg(2+). Residues 192–262 (TADELARIVT…MADAALAMLD (71 aa)) are small ATPAse domain (RuvB-S). The interval 265–352 (SVGFDLMDRK…SGASELFGDA (88 aa)) is head domain (RuvB-H). DNA is bound by residues arginine 301, arginine 320, and arginine 325.

This sequence belongs to the RuvB family. Homohexamer. Forms an RuvA(8)-RuvB(12)-Holliday junction (HJ) complex. HJ DNA is sandwiched between 2 RuvA tetramers; dsDNA enters through RuvA and exits via RuvB. An RuvB hexamer assembles on each DNA strand where it exits the tetramer. Each RuvB hexamer is contacted by two RuvA subunits (via domain III) on 2 adjacent RuvB subunits; this complex drives branch migration. In the full resolvosome a probable DNA-RuvA(4)-RuvB(12)-RuvC(2) complex forms which resolves the HJ.

Its subcellular location is the cytoplasm. It catalyses the reaction ATP + H2O = ADP + phosphate + H(+). Its function is as follows. The RuvA-RuvB-RuvC complex processes Holliday junction (HJ) DNA during genetic recombination and DNA repair, while the RuvA-RuvB complex plays an important role in the rescue of blocked DNA replication forks via replication fork reversal (RFR). RuvA specifically binds to HJ cruciform DNA, conferring on it an open structure. The RuvB hexamer acts as an ATP-dependent pump, pulling dsDNA into and through the RuvAB complex. RuvB forms 2 homohexamers on either side of HJ DNA bound by 1 or 2 RuvA tetramers; 4 subunits per hexamer contact DNA at a time. Coordinated motions by a converter formed by DNA-disengaged RuvB subunits stimulates ATP hydrolysis and nucleotide exchange. Immobilization of the converter enables RuvB to convert the ATP-contained energy into a lever motion, pulling 2 nucleotides of DNA out of the RuvA tetramer per ATP hydrolyzed, thus driving DNA branch migration. The RuvB motors rotate together with the DNA substrate, which together with the progressing nucleotide cycle form the mechanistic basis for DNA recombination by continuous HJ branch migration. Branch migration allows RuvC to scan DNA until it finds its consensus sequence, where it cleaves and resolves cruciform DNA. This chain is Holliday junction branch migration complex subunit RuvB, found in Cupriavidus necator (strain ATCC 17699 / DSM 428 / KCTC 22496 / NCIMB 10442 / H16 / Stanier 337) (Ralstonia eutropha).